The sequence spans 154 residues: Myoglobin (154 aa).

The region spanning 2–148 is the Globin domain; it reads GLSDGEWQLV…FRKDIAAKYK (147 aa). At Ser-4 the chain carries Phosphoserine. His-65 contacts nitrite. His-65 is a binding site for O2. Thr-68 is modified (phosphothreonine). His-94 lines the heme b pocket.

Belongs to the globin family. In terms of assembly, monomeric.

It is found in the cytoplasm. Its subcellular location is the sarcoplasm. It carries out the reaction Fe(III)-heme b-[protein] + nitric oxide + H2O = Fe(II)-heme b-[protein] + nitrite + 2 H(+). The enzyme catalyses H2O2 + AH2 = A + 2 H2O. In terms of biological role, monomeric heme protein which primary function is to store oxygen and facilitate its diffusion within muscle tissues. Reversibly binds oxygen through a pentacoordinated heme iron and enables its timely and efficient release as needed during periods of heightened demand. Depending on the oxidative conditions of tissues and cells, and in addition to its ability to bind oxygen, it also has a nitrite reductase activity whereby it regulates the production of bioactive nitric oxide. Under stress conditions, like hypoxia and anoxia, it also protects cells against reactive oxygen species thanks to its pseudoperoxidase activity. This chain is Myoglobin (MB), found in Peponocephala electra (Melon-headed whale).